The primary structure comprises 197 residues: Potassium-transporting ATPase KdpC subunit (197 aa).

Residues 7-27 (PAFISLILFTLLFGLIYPLTV) traverse the membrane as a helical segment.

This sequence belongs to the KdpC family. In terms of assembly, the system is composed of three essential subunits: KdpA, KdpB and KdpC.

Its subcellular location is the cell inner membrane. Its function is as follows. Part of the high-affinity ATP-driven potassium transport (or Kdp) system, which catalyzes the hydrolysis of ATP coupled with the electrogenic transport of potassium into the cytoplasm. This subunit acts as a catalytic chaperone that increases the ATP-binding affinity of the ATP-hydrolyzing subunit KdpB by the formation of a transient KdpB/KdpC/ATP ternary complex. The polypeptide is Potassium-transporting ATPase KdpC subunit (Beijerinckia indica subsp. indica (strain ATCC 9039 / DSM 1715 / NCIMB 8712)).